The following is a 219-amino-acid chain: ATP-dependent Clp protease proteolytic subunit (219 aa).

Catalysis depends on Ser101, which acts as the Nucleophile. His126 is a catalytic residue.

It belongs to the peptidase S14 family. As to quaternary structure, component of the chloroplastic Clp protease core complex.

It is found in the plastid. It localises to the chloroplast stroma. The enzyme catalyses Hydrolysis of proteins to small peptides in the presence of ATP and magnesium. alpha-casein is the usual test substrate. In the absence of ATP, only oligopeptides shorter than five residues are hydrolyzed (such as succinyl-Leu-Tyr-|-NHMec, and Leu-Tyr-Leu-|-Tyr-Trp, in which cleavage of the -Tyr-|-Leu- and -Tyr-|-Trp bonds also occurs).. Functionally, cleaves peptides in various proteins in a process that requires ATP hydrolysis. Has a chymotrypsin-like activity. Plays a major role in the degradation of misfolded proteins. This Chara vulgaris (Common stonewort) protein is ATP-dependent Clp protease proteolytic subunit.